A 102-amino-acid polypeptide reads, in one-letter code: Small ribosomal subunit protein uS10 (102 aa).

This sequence belongs to the universal ribosomal protein uS10 family. Part of the 30S ribosomal subunit.

Involved in the binding of tRNA to the ribosomes. This is Small ribosomal subunit protein uS10 from Rhodopseudomonas palustris (strain BisB18).